The following is a 377-amino-acid chain: MSSSSPAGTARTIRKKVYDASLKAMFTLRPERIHGIIADGLGVLQMATPVNRAMGRVIGVNDPVLSQEVFGVTFPRPLGLAAGFDKNATAADTWTALGFGYAELGTVTASPQAGNPTPRLFRLPADRAILNRMGFNNAGAADVADNLRRRKSRDVIGINIGKTKVVPAEQAVDDYRRSASLLGDLADYLVVNVSSPNTPGLRDLQAVESLRPILAAVQESTSVPVLVKIAPDLSDEDVDAVADLAVELGLAGIVATNTTISREGLVTPAHEVAEMGAGGISGPPVAERALEVLRRLHARVGDQLVLIGVGGISTPEQAWERIAAGATLLQGYTGFIYGGPDWIRDIHLGLAEQVKAHGLSNISEAVGSGLPWKDSAV.

FMN contacts are provided by residues 82-86 and T106; that span reads AGFDK. K86 serves as a coordination point for substrate. Position 131–135 (131–135) interacts with substrate; it reads NRMGF. 2 residues coordinate FMN: N159 and N192. N192 contacts substrate. S195 acts as the Nucleophile in catalysis. N197 serves as a coordination point for substrate. The FMN site is built by K228 and T256. A substrate-binding site is contributed by 257-258; sequence NT. Residues G282, G311, and 332 to 333 each bind FMN; that span reads YT.

Belongs to the dihydroorotate dehydrogenase family. Type 2 subfamily. As to quaternary structure, monomer. FMN is required as a cofactor.

The protein localises to the cell membrane. It catalyses the reaction (S)-dihydroorotate + a quinone = orotate + a quinol. The protein operates within pyrimidine metabolism; UMP biosynthesis via de novo pathway; orotate from (S)-dihydroorotate (quinone route): step 1/1. Catalyzes the conversion of dihydroorotate to orotate with quinone as electron acceptor. This is Dihydroorotate dehydrogenase (quinone) from Corynebacterium efficiens (strain DSM 44549 / YS-314 / AJ 12310 / JCM 11189 / NBRC 100395).